The chain runs to 452 residues: Ribosomal protein uS12 methylthiotransferase RimO (452 aa).

The MTTase N-terminal domain maps to Pro-5 to Ser-116. Positions 14, 50, 79, 154, 158, and 161 each coordinate [4Fe-4S] cluster. In terms of domain architecture, Radical SAM core spans Thr-140–Arg-369. The 67-residue stretch at Arg-372 to Ser-438 folds into the TRAM domain.

It belongs to the methylthiotransferase family. RimO subfamily. It depends on [4Fe-4S] cluster as a cofactor.

Its subcellular location is the cytoplasm. The catalysed reaction is L-aspartate(89)-[ribosomal protein uS12]-hydrogen + (sulfur carrier)-SH + AH2 + 2 S-adenosyl-L-methionine = 3-methylsulfanyl-L-aspartate(89)-[ribosomal protein uS12]-hydrogen + (sulfur carrier)-H + 5'-deoxyadenosine + L-methionine + A + S-adenosyl-L-homocysteine + 2 H(+). Its function is as follows. Catalyzes the methylthiolation of an aspartic acid residue of ribosomal protein uS12. The chain is Ribosomal protein uS12 methylthiotransferase RimO from Synechococcus elongatus (strain ATCC 33912 / PCC 7942 / FACHB-805) (Anacystis nidulans R2).